Reading from the N-terminus, the 101-residue chain is NADH-quinone oxidoreductase subunit K (101 aa).

Helical transmembrane passes span 4–24 (LGHLLGLGAVLFCISLAGIFL), 30–50 (IVLLMSIELMLLSVNVNFIAF), and 62–82 (FVFFILTVAAAEAAIGLAILV).

Belongs to the complex I subunit 4L family. As to quaternary structure, NDH-1 is composed of 14 different subunits. Subunits NuoA, H, J, K, L, M, N constitute the membrane sector of the complex.

It is found in the cell inner membrane. It catalyses the reaction a quinone + NADH + 5 H(+)(in) = a quinol + NAD(+) + 4 H(+)(out). Functionally, NDH-1 shuttles electrons from NADH, via FMN and iron-sulfur (Fe-S) centers, to quinones in the respiratory chain. The immediate electron acceptor for the enzyme in this species is believed to be ubiquinone. Couples the redox reaction to proton translocation (for every two electrons transferred, four hydrogen ions are translocated across the cytoplasmic membrane), and thus conserves the redox energy in a proton gradient. The polypeptide is NADH-quinone oxidoreductase subunit K (Xanthomonas axonopodis pv. citri (strain 306)).